The following is a 41-amino-acid chain: Large ribosomal subunit protein bL36 (41 aa).

Belongs to the bacterial ribosomal protein bL36 family.

This chain is Large ribosomal subunit protein bL36, found in Bartonella tribocorum (strain CIP 105476 / IBS 506).